Here is a 121-residue protein sequence, read N- to C-terminus: NAD(P)H-quinone oxidoreductase subunit 3, chloroplastic (121 aa).

The next 3 helical transmembrane spans lie at Phe-10–Leu-30, Met-65–Met-85, and Leu-90–Ile-110.

This sequence belongs to the complex I subunit 3 family. NDH is composed of at least 16 different subunits, 5 of which are encoded in the nucleus.

It localises to the plastid. The protein localises to the chloroplast thylakoid membrane. It catalyses the reaction a plastoquinone + NADH + (n+1) H(+)(in) = a plastoquinol + NAD(+) + n H(+)(out). It carries out the reaction a plastoquinone + NADPH + (n+1) H(+)(in) = a plastoquinol + NADP(+) + n H(+)(out). Functionally, NDH shuttles electrons from NAD(P)H:plastoquinone, via FMN and iron-sulfur (Fe-S) centers, to quinones in the photosynthetic chain and possibly in a chloroplast respiratory chain. The immediate electron acceptor for the enzyme in this species is believed to be plastoquinone. Couples the redox reaction to proton translocation, and thus conserves the redox energy in a proton gradient. This chain is NAD(P)H-quinone oxidoreductase subunit 3, chloroplastic, found in Staurastrum punctulatum (Green alga).